The primary structure comprises 482 residues: Glutamyl-tRNA(Gln) amidotransferase subunit A (482 aa).

Residues K74 and S149 each act as charge relay system in the active site. Residue S173 is the Acyl-ester intermediate of the active site.

This sequence belongs to the amidase family. GatA subfamily. As to quaternary structure, heterotrimer of A, B and C subunits.

The enzyme catalyses L-glutamyl-tRNA(Gln) + L-glutamine + ATP + H2O = L-glutaminyl-tRNA(Gln) + L-glutamate + ADP + phosphate + H(+). In terms of biological role, allows the formation of correctly charged Gln-tRNA(Gln) through the transamidation of misacylated Glu-tRNA(Gln) in organisms which lack glutaminyl-tRNA synthetase. The reaction takes place in the presence of glutamine and ATP through an activated gamma-phospho-Glu-tRNA(Gln). The sequence is that of Glutamyl-tRNA(Gln) amidotransferase subunit A from Prochlorococcus marinus (strain AS9601).